The primary structure comprises 364 residues: Methylenetetrahydrofolate--tRNA-(uracil-5-)-methyltransferase TrmFO (364 aa).

Residue glycine 11–glycine 16 participates in FAD binding. The segment covering serine 335–leucine 352 has biased composition (polar residues). The disordered stretch occupies residues serine 335–glutamine 364.

Belongs to the MnmG family. TrmFO subfamily. FAD serves as cofactor.

The protein localises to the cytoplasm. It carries out the reaction uridine(54) in tRNA + (6R)-5,10-methylene-5,6,7,8-tetrahydrofolate + NADH + H(+) = 5-methyluridine(54) in tRNA + (6S)-5,6,7,8-tetrahydrofolate + NAD(+). The enzyme catalyses uridine(54) in tRNA + (6R)-5,10-methylene-5,6,7,8-tetrahydrofolate + NADPH + H(+) = 5-methyluridine(54) in tRNA + (6S)-5,6,7,8-tetrahydrofolate + NADP(+). In terms of biological role, catalyzes the folate-dependent formation of 5-methyl-uridine at position 54 (M-5-U54) in all tRNAs. The polypeptide is Methylenetetrahydrofolate--tRNA-(uracil-5-)-methyltransferase TrmFO (Prochlorococcus marinus (strain MIT 9313)).